Consider the following 345-residue polypeptide: Protein RecA (345 aa).

65 to 72 is an ATP binding site; sequence GPESSGKT.

This sequence belongs to the RecA family.

It is found in the cytoplasm. Can catalyze the hydrolysis of ATP in the presence of single-stranded DNA, the ATP-dependent uptake of single-stranded DNA by duplex DNA, and the ATP-dependent hybridization of homologous single-stranded DNAs. It interacts with LexA causing its activation and leading to its autocatalytic cleavage. This chain is Protein RecA, found in Stenotrophomonas maltophilia (strain R551-3).